We begin with the raw amino-acid sequence, 1643 residues long: MSSTLHSVFFTLKVSILLGSLLGLCLGLEFMGLPNQWARYLRWDASTRSDLSFQFKTNVSTGLLLYLDDGGVCDFLCLSLVDGRVQLRFSMDCAETAVLSNKQVNDSSWHFLMVSRDRLRTVLMLDGEGQSGELQPQRPYMDVVSDLFLGGVPTDIRPSALTLDGVQAMPGFKGLILDLKYGNSEPRLLGSRGVQMDAEGPCGERPCENGGICFLLDGHPTCDCSTTGYGGKLCSEDVSQDPGLSHLMMSEQAREENVATFRGSEYLCYDLSQNPIQSSSDEITLSFKTWQRNGLILHTGKSADYVNLALKDGAVSLVINLGSGAFEAIVEPVNGKFNDNAWHDVKVTRNLRQVTISVDGILTTTGYTQEDYTMLGSDDFFYVGGSPSTADLPGSPVSNNFMGCLKEVVYKNNDIRLELSRLARIADTKMKIYGEVVFKCENVATLDPINFETPEAYISLPKWNTKRMGSISFDFRTTEPNGLILFTHGKPQERKDARSQKNTKVDFFAVELLDGNLYLLLDMGSGTIKVKATQKKANDGEWYHVDIQRDGRSGTISVNSRRTPFTASGESEILDLEGDMYLGGLPENRAGLILPTELWTAMLNYGYVGCIRDLFIDGRSKNIRQLAEMQNAAGVKSSCSRMSAKQCDSYPCKNNAVCKDGWNRFICDCTGTGYWGRTCEREASILSYDGSMYMKIIMPMVMHTEAEDVSFRFMSQRAYGLLVATTSRDSADTLRLELDGGRVKLMVNLDCIRINCNSSKGPETLYAGQKLNDNEWHTVRVVRRGKSLKLTVDDDVAEGTMVGDHTRLEFHNIETGIMTEKRYISVVPSSFIGHLQSLMFNGLLYIDLCKNGDIDYCELKARFGLRNIIADPVTFKTKSSYLSLATLQAYTSMHLFFQFKTTSPDGFILFNSGDGNDFIAVELVKGYIHYVFDLGNGPNVIKGNSDRPLNDNQWHNVVITRDNSNTHSLKVDTKVVTQVINGAKNLDLKGDLYMAGLAQGMYSNLPKLVASRDGFQGCLASVDLNGRLPDLINDALHRSGQIERGCEGPSTTCQEDSCANQGVCMQQWEGFTCDCSMTSYSGNQCNDPGATYIFGKSGGLILYTWPANDRPSTRSDRLAVGFSTTVKDGILVRIDSAPGLGDFLQLHIEQGKIGVVFNIGTVDISIKEERTPVNDGKYHVVRFTRNGGNATLQVDNWPVNEHYPTGRQLTIFNTQAQIAIGGKDKGRLFQGQLSGLYYDGLKVLNMAAENNPNIKINGSVRLVGEVPSILGTTQTTSMPPEMSTTVMETTTTMATTTTRKNRSTASIQPTSDDLVSSAECSSDDEDFVECEPSTTGGELVIPLLVEDPLATPPIATRAPSITLPPTFRPLLTIIETTKDSLSMTSEAGLPCLSDQGSDGCDDDGLVISGYGSGETFDSNLPPTDDEDFYTTFSLVTDKSLSTSIFEGGYKAHAPKWESKDFRPNKVSETSRTTTTSLSPELIRFTASSSSGMVPKLPAGKMNNRDLKPQPDIVLLPLPTAYELDSTKLKSPLITSPMFRNVPTANPTEPGIRRVPGASEVIRESSSTTGMVVGIVAAAALCILILLYAMYKYRNRDEGSYQVDETRNYISNSAQSNGTLMKEKQQSSKSGHKKQKNKDREYYV.

Positions 1-27 are cleaved as a signal peptide; that stretch reads MSSTLHSVFFTLKVSILLGSLLGLCLG. One can recognise a Laminin G-like 1 domain in the interval 28-202; sequence LEFMGLPNQW…GVQMDAEGPC (175 aa). Residues 28-1568 are Extracellular-facing; that stretch reads LEFMGLPNQW…EVIRESSSTT (1541 aa). 2 N-linked (GlcNAc...) asparagine glycosylation sites follow: asparagine 58 and asparagine 105. In terms of domain architecture, EGF-like 1 spans 198–235; it reads AEGPCGERPCENGGICFLLDGHPTCDCSTTGYGGKLCS. 3 cysteine pairs are disulfide-bonded: cysteine 202–cysteine 213, cysteine 207–cysteine 222, and cysteine 224–cysteine 234. Laminin G-like domains lie at 258–440 and 447–639; these read VATF…VFKC and DPIN…KSSC. Ca(2+) contacts are provided by aspartate 304, leucine 321, and methionine 374. 5 cysteine pairs are disulfide-bonded: cysteine 404-cysteine 440, cysteine 610-cysteine 639, cysteine 647-cysteine 658, cysteine 652-cysteine 667, and cysteine 669-cysteine 679. Positions 643–680 constitute an EGF-like 2 domain; the sequence is SAKQCDSYPCKNNAVCKDGWNRFICDCTGTGYWGRTCE. Laminin G-like domains are found at residues 685–857 and 871–1046; these read ILSY…IDYC and DPVT…ERGC. The Ca(2+) site is built by aspartate 732 and leucine 749. Asparagine 757 carries an N-linked (GlcNAc...) asparagine glycan. Arginine 807 contributes to the Ca(2+) binding site. 4 disulfide bridges follow: cysteine 1018-cysteine 1046, cysteine 1053-cysteine 1064, cysteine 1058-cysteine 1073, and cysteine 1075-cysteine 1085. An EGF-like 3 domain is found at 1049–1086; it reads PSTTCQEDSCANQGVCMQQWEGFTCDCSMTSYSGNQCN. Residues 1090–1260 enclose the Laminin G-like 6 domain; that stretch reads ATYIFGKSGG…NPNIKINGSV (171 aa). Ca(2+)-binding residues include aspartate 1142 and isoleucine 1159. The N-linked (GlcNAc...) asparagine glycan is linked to asparagine 1189. Ca(2+) contacts are provided by isoleucine 1211 and asparagine 1213. N-linked (GlcNAc...) asparagine glycosylation is found at asparagine 1257 and asparagine 1301. The segment at 1294–1318 is disordered; the sequence is ATTTTRKNRSTASIQPTSDDLVSSA. The span at 1303–1318 shows a compositional bias: polar residues; it reads STASIQPTSDDLVSSA. O-linked (Xyl...) (heparan sulfate) serine glycosylation is present at serine 1317. A helical membrane pass occupies residues 1569–1589; it reads GMVVGIVAAAALCILILLYAM. At 1590-1643 the chain is on the cytoplasmic side; sequence YKYRNRDEGSYQVDETRNYISNSAQSNGTLMKEKQQSSKSGHKKQKNKDREYYV. The interval 1611 to 1643 is disordered; the sequence is NSAQSNGTLMKEKQQSSKSGHKKQKNKDREYYV.

The protein belongs to the neurexin family. The laminin G-like domain 2 binds to NXPH1. Specific isoforms bind to alpha-dystroglycan. The cytoplasmic C-terminal region binds to CASK. Specific isoforms bind neuroligins NLGN1, NLGN2 and NLGN3. Interacts with CLSTN3. In terms of processing, O-glycosylated; contains heparan sulfate. Heparan sulfate attachment is required for synapse development by mediating interactions with neuroligins. As to expression, expressed in the blood vessel walls (at protein level). Highly expressed in brain, lung, and pancreas; a lower level of expression is detectable in heart, placenta, liver, and kidney, whereas no expression can be observed in skeletal muscle. Isoform 4a is heart-specific.

The protein localises to the presynaptic cell membrane. Functionally, neuronal cell surface protein that may be involved in cell recognition and cell adhesion. May mediate intracellular signaling. The chain is Neurexin-3 (NRXN3) from Homo sapiens (Human).